A 4763-amino-acid chain; its full sequence is Nonribosomal peptide synthetase sidC (4763 aa).

The interval 1-24 (MAGTANPADEGLTGPTETTNHINS) is disordered. Residues 15 to 24 (PTETTNHINS) are compositionally biased toward polar residues. The segment at 296–815 (STVAEHSTLT…SSGKVDRNSI (520 aa)) is adenylation 1. Residues 853–930 (EKALELRTLV…GLLTLILNGK (78 aa)) enclose the Carrier 1 domain. Residue serine 890 is modified to O-(pantetheine 4'-phosphoryl)serine. Positions 1003-1396 (TRSYIYHSVI…DIIAFILQNP (394 aa)) are condensation 1. Residues 1398–1951 (GDFENALLYT…AKTDRRALQA (554 aa)) form an adenylation 2 region. The Carrier 2 domain maps to 1979 to 2055 (LVASDAMEKI…DLARLCTSSS (77 aa)). Serine 2016 carries the post-translational modification O-(pantetheine 4'-phosphoryl)serine. Positions 2092 to 2423 (TPIQESLLSE…HIHAREVRRM (332 aa)) are condensation 2. The interval 2556–3070 (ELNAREHPEW…MSGKANIKEL (515 aa)) is adenylation 3. The Carrier 3 domain occupies 3099–3175 (RPLSSDEEAV…QLAQLPRKST (77 aa)). Serine 3136 carries the O-(pantetheine 4'-phosphoryl)serine modification. The condensation 3 stretch occupies residues 3217–3626 (PLQEGLVARS…DDIALDSFSL (410 aa)). Residues 3647–3720 (SATETKIRDL…ALAEHVDERS (74 aa)) enclose the Carrier 4 domain. An O-(pantetheine 4'-phosphoryl)serine modification is found at serine 3681. Residues 3761 to 4093 (TPLQAGMITR…SLFDTLFVFQ (333 aa)) are condensation 4. In terms of domain architecture, Carrier 5 spans 4204–4277 (PAHESIIRDV…GISARIISPV (74 aa)). Serine 4238 is modified (O-(pantetheine 4'-phosphoryl)serine). The interval 4344 to 4593 (ERIDSGKLEE…PCLNVTPFTF (250 aa)) is condensation 5.

It belongs to the NRP synthetase family.

It functions in the pathway siderophore biosynthesis. In terms of biological role, nonribosomal peptide synthase; part of the siderophore biosynthetic pathway. Aspergillus fumigatus produces four types of siderophores, low-molecular-mass iron chelators, including excreted fusarinine C (FsC) and triacetylfusarinine C (TAFC) for iron uptake; and intacellular ferricrocin (FC) for hyphal and hydroxyferricrocin (HFC) for conidial iron distribution and storage. TAFC consists of three N(2)-acetyl-N(5)-anhydromevalonyl-N(5)-hydroxyornithine residues cyclically linked by ester bonds; FC is a cyclic hexapeptide with the structure Gly-Ser-Gly-(N(5)-acetyl-N(5)-hydroxyornithine)x3. The biosynthesis of all four siderophores depends on the hydroxylation of ornithine, catalyzed by the monooxygenase sidA. Subsequently, the pathways for biosynthesis of extra- and intracellular siderophores split. For biosynthesis of extracellular siderophores, the transacylase sidF transfers anhydromevalonyl to N(5)-hydroxyornithine. The required anhydromevalonyl-CoA moiety is derived from mevalonate by CoA ligation and dehydration catalyzed by sidI and sidH respectively. The acetylation of N(5)-hydroxyornithine for FC biosynthesis involves the constitutively expressed sidL. FC is hydroxylated to HFC by an as yet uncharacterized enzyme during conidiation. Assembly of fusarinine C (FsC) and FC is catalyzed by two different nonribosomal peptide synthetases (NRPS), sidD and sidC respectively. Subsequently, sidG catalyzes N2-acetylation of FsC for forming TAFC. Both extra- and intracellular siderophores are crucial for growth during iron limitation and virulence. The chain is Nonribosomal peptide synthetase sidC from Aspergillus fumigatus (strain ATCC MYA-4609 / CBS 101355 / FGSC A1100 / Af293) (Neosartorya fumigata).